Reading from the N-terminus, the 654-residue chain is C6 finger domain transcription factor nscR (654 aa).

A DNA-binding region (zn(2)-C6 fungal-type) is located at residues 17–43; sequence CELCRERKVKCDKLDPCTNCSSAGVIC.

The protein localises to the nucleus. Its function is as follows. Transcription factor that specifically regulates the neosartoricin B biosynthesis gene cluster. This Trichophyton verrucosum (strain HKI 0517) protein is C6 finger domain transcription factor nscR.